A 1292-amino-acid chain; its full sequence is DNA-directed RNA polymerase subunit beta' (1292 aa).

4 residues coordinate Zn(2+): Cys70, Cys72, Cys85, and Cys88. Residues Asp532, Asp534, and Asp536 each contribute to the Mg(2+) site. The Zn(2+) site is built by Cys911, Cys987, Cys994, and Cys997.

It belongs to the RNA polymerase beta' chain family. As to quaternary structure, the RNAP catalytic core consists of 2 alpha, 1 beta, 1 beta' and 1 omega subunit. When a sigma factor is associated with the core the holoenzyme is formed, which can initiate transcription. The cofactor is Mg(2+). Zn(2+) is required as a cofactor.

The catalysed reaction is RNA(n) + a ribonucleoside 5'-triphosphate = RNA(n+1) + diphosphate. Its function is as follows. DNA-dependent RNA polymerase catalyzes the transcription of DNA into RNA using the four ribonucleoside triphosphates as substrates. The sequence is that of DNA-directed RNA polymerase subunit beta' from Mycoplasma genitalium (strain ATCC 33530 / DSM 19775 / NCTC 10195 / G37) (Mycoplasmoides genitalium).